The following is a 330-amino-acid chain: Aspartate--ammonia ligase (330 aa).

Belongs to the class-II aminoacyl-tRNA synthetase family. AsnA subfamily. In terms of assembly, homodimer.

It is found in the cytoplasm. It catalyses the reaction L-aspartate + NH4(+) + ATP = L-asparagine + AMP + diphosphate + H(+). The protein operates within amino-acid biosynthesis; L-asparagine biosynthesis; L-asparagine from L-aspartate (ammonia route): step 1/1. The sequence is that of Aspartate--ammonia ligase from Salmonella typhi.